Consider the following 361-residue polypeptide: BBSome complex member bbs-5 (361 aa).

This sequence belongs to the BBS5 family. In terms of assembly, part of BBSome complex, that contains at least bbs-1, bbs-2, bbs-4, bbs-5, osm-12, bbs-8/ttc-8 and bbs-9. Interacts with bbs-4 (via C-terminus); the interaction is direct.

It localises to the cell projection. It is found in the cilium membrane. Its subcellular location is the cytoplasm. The protein resides in the cytoskeleton. The protein localises to the cilium basal body. It localises to the microtubule organizing center. It is found in the centrosome. Its subcellular location is the centriolar satellite. Functionally, component of the BBSome complex. The BBSome complex is thought to function as a coat complex required for sorting of specific membrane proteins to the primary cilia. The BBSome complex is required for ciliogenesis but is dispensable for centriolar satellite function. Required for BBSome complex ciliary localization but not for the proper complex assembly. Required, redundantly with bbs-4, for cilia biogenesis and both the assembly and movement of intraflagellar transport proteins along the ciliary axoneme. Plays a role in the removal of degraded mechanosensory receptors within the cilia. This is BBSome complex member bbs-5 from Caenorhabditis elegans.